The chain runs to 87 residues: Toxin Cll5b (87 aa).

The signal sequence occupies residues 1–19 (MNSLLMITACLAEIGTVWA). One can recognise an LCN-type CS-alpha/beta domain in the interval 20-85 (KEGYLVNKST…TYPLPNKSCS (66 aa)). 4 disulfide bridges follow: Cys-31–Cys-84, Cys-35–Cys-60, Cys-44–Cys-65, and Cys-48–Cys-67. Residues 86-87 (KK) constitute a propeptide, removed by a carboxypeptidase.

This sequence belongs to the long (4 C-C) scorpion toxin superfamily. Sodium channel inhibitor family. Beta subfamily. In terms of tissue distribution, expressed by the venom gland.

Its subcellular location is the secreted. Its function is as follows. Beta toxins bind voltage-independently at site-4 of sodium channels (Nav) and shift the voltage of activation toward more negative potentials thereby affecting sodium channel activation and promoting spontaneous and repetitive firing. In Centruroides limpidus (Mexican scorpion), this protein is Toxin Cll5b.